We begin with the raw amino-acid sequence, 368 residues long: Probable dual-specificity RNA methyltransferase RlmN (368 aa).

Glutamate 111 acts as the Proton acceptor in catalysis. A Radical SAM core domain is found at 117–355 (YPNRATLCIS…CTVRDTRGQE (239 aa)). An intrachain disulfide couples cysteine 124 to cysteine 360. The [4Fe-4S] cluster site is built by cysteine 131, cysteine 135, and cysteine 138. S-adenosyl-L-methionine contacts are provided by residues 181 to 182 (GE), serine 215, 238 to 240 (SLH), and asparagine 317. Cysteine 360 acts as the S-methylcysteine intermediate in catalysis.

This sequence belongs to the radical SAM superfamily. RlmN family. Requires [4Fe-4S] cluster as cofactor.

The protein resides in the cytoplasm. The catalysed reaction is adenosine(2503) in 23S rRNA + 2 reduced [2Fe-2S]-[ferredoxin] + 2 S-adenosyl-L-methionine = 2-methyladenosine(2503) in 23S rRNA + 5'-deoxyadenosine + L-methionine + 2 oxidized [2Fe-2S]-[ferredoxin] + S-adenosyl-L-homocysteine. It catalyses the reaction adenosine(37) in tRNA + 2 reduced [2Fe-2S]-[ferredoxin] + 2 S-adenosyl-L-methionine = 2-methyladenosine(37) in tRNA + 5'-deoxyadenosine + L-methionine + 2 oxidized [2Fe-2S]-[ferredoxin] + S-adenosyl-L-homocysteine. In terms of biological role, specifically methylates position 2 of adenine 2503 in 23S rRNA and position 2 of adenine 37 in tRNAs. The chain is Probable dual-specificity RNA methyltransferase RlmN from Corynebacterium diphtheriae (strain ATCC 700971 / NCTC 13129 / Biotype gravis).